The primary structure comprises 109 residues: Oncomodulin (109 aa).

Ser-2 is modified (N-acetylserine). 2 EF-hand domains span residues Met-39–Asp-74 and Leu-78–Ser-109. Residues Asp-52, Asp-54, Ser-56, Tyr-58, Glu-63, Asp-91, Asp-93, Asp-95, Lys-97, and Glu-102 each contribute to the Ca(2+) site.

The protein belongs to the parvalbumin family. As to expression, found in tumor tissues and not detected in normal tissues.

Has some calmodulin-like activity with respect to enzyme activation and growth regulation. Binds two calcium ions. This Rattus norvegicus (Rat) protein is Oncomodulin (Ocm).